Here is a 646-residue protein sequence, read N- to C-terminus: MSTSKSSKVRIRNFIGRIFSPSDKDKDRDDEMKPSSSAMDISQPYNTVHRVHVGYDGQKFSGLPQPWMDILLRDISLADQKKDPNAVVTALKFYAQSMKENEKTKFMTTNSVFTNSDDDDVDVQLTGQVTEHLRNLQCSNGSATSPSTSVSASSSSARPLTNGNNHLSTASSTDTSLSLSERNNVPSPAPVPYSESAPQLKTFTGETPKLHPRSPFPPQPPVLPQRSKTASAVATTTTNPTTSNGAPPPVPGSKGPPVPPKPSHLKIASSTVSSGCSSPQQYSSARSVGNSLSNGSVVSTTSSDGDVQLSNKENSNDKSVGDKNGNTTTNKTTVEPPPPEEPPVRVRASHREKLSDSEVLNQLREIVNPSNPLGKYEMKKQIGVGASGTVFVANVAGSTDVVAVKRMAFKTQPKKEMLLTEIKVMKQYRHPNLVNYIESYLVDADDLWVVMDYLEGGNLTDVVVKTELDEGQIAAVLQECLKALHFLHRHSIVHRDIKSDNVLLGMNGEVKLTDMGFCAQIQPGSKRDTVVGTPYWMSPEILNKKQYNYKVDIWSLGIMALEMIDGEPPYLRETPLKAIYLIAQNGKPEIKQRDRLSSEFNNFLDKCLVVDPDQRADTTELLAHPFLKKAKPLSSLIPYIRAVREK.

Residues 19–40 (FSPSDKDKDRDDEMKPSSSAMD) form a disordered region. The segment covering 22-33 (SDKDKDRDDEMK) has biased composition (basic and acidic residues). The CRIB domain maps to 41 to 54 (ISQPYNTVHRVHVG). The segment at 136–345 (LQCSNGSATS…PPPPEEPPVR (210 aa)) is disordered. 2 stretches are compositionally biased toward low complexity: residues 142-157 (SATSPSTSVSASSSSA) and 167-180 (LSTASSTDTSLSLS). Residues 196–205 (SAPQLKTFTG) show a composition bias toward polar residues. Residues 214–223 (SPFPPQPPVL) show a composition bias toward pro residues. The segment covering 229 to 245 (TASAVATTTTNPTTSNG) has biased composition (low complexity). Residues 246-262 (APPPVPGSKGPPVPPKP) show a composition bias toward pro residues. Low complexity-rich tracts occupy residues 273-307 (SSGCSSPQQYSSARSVGNSLSNGSVVSTTSSDGDV) and 323-334 (KNGNTTTNKTTV). Residues 376–627 (YEMKKQIGVG…TTELLAHPFL (252 aa)) form the Protein kinase domain. Residues 382 to 390 (IGVGASGTV) and Lys-405 each bind ATP. Asp-496 functions as the Proton acceptor in the catalytic mechanism.

The protein belongs to the protein kinase superfamily. STE Ser/Thr protein kinase family. STE20 subfamily. As to quaternary structure, interacts with mlk-1; the interaction is independent of max-2 and mlk-1 kinase activities. Interacts with mig-2 (GTP-bound form). Mg(2+) serves as cofactor.

Its subcellular location is the perikaryon. It is found in the cell projection. The protein resides in the dendrite. The protein localises to the cytoplasm. The catalysed reaction is L-seryl-[protein] + ATP = O-phospho-L-seryl-[protein] + ADP + H(+). It catalyses the reaction L-threonyl-[protein] + ATP = O-phospho-L-threonyl-[protein] + ADP + H(+). Its function is as follows. Serine/threonine-protein kinase, which phosphorylates mlk-1. Involved in the stress response to heavy metals by activating the mlk-1/mek-1/kgb-1 pathway. In ventral cord commissural motoneurons, required for dorsal axon guidance downstream of unc-6/netrin repulsion receptor unc-5 and probably of Rho GTPases ced-10 and mig-2. Plays a redundant role with mig-10 in orientating axonal growth of HSN neurons. Plays a redundant role with pak-1 in P neuroblast migration and in distal tip cell (DTC)-mediated guidance of gonad elongation probably downstream of Rho GTPases. In association with pak-2, plays a role in embryogenesis. In association with pak-1, may be involved in spermatogenesis. The protein is Serine/threonine-protein kinase max-2 of Caenorhabditis elegans.